The primary structure comprises 473 residues: Zinc finger and SCAN domain-containing protein 21 (473 aa).

K27 is covalently cross-linked (Glycyl lysine isopeptide (Lys-Gly) (interchain with G-Cter in SUMO2)). Residues 45–127 (RQRFRQFGYH…TLLEDLEREL (83 aa)) enclose the SCAN box domain. The interval 127–169 (LDEPGHQVSTPPNEQKPVWEKISSSGTAKESPSSMQPQPLETS) is disordered. A compositionally biased stretch (polar residues) spans 148–167 (ISSSGTAKESPSSMQPQPLE). Glycyl lysine isopeptide (Lys-Gly) (interchain with G-Cter in SUMO2) cross-links involve residues K221 and K232. The disordered stretch occupies residues 244–272 (LENEKGTKPPLQEAGSKKGRESVPTKPTP). Residues 258-272 (GSKKGRESVPTKPTP) show a composition bias toward basic and acidic residues. 7 C2H2-type zinc fingers span residues 277 to 299 (YICA…RRTH), 305 to 327 (YVCT…YRTH), 333 to 354 (YDCK…QRMH), 360 to 382 (YQCK…YRIH), 388 to 410 (YQCN…QRLH), 416 to 438 (YKCK…HRIH), and 444 to 466 (YWCH…QRVH). K349 participates in a covalent cross-link: Glycyl lysine isopeptide (Lys-Gly) (interchain with G-Cter in SUMO2).

Belongs to the krueppel C2H2-type zinc-finger protein family.

It is found in the nucleus. Strong transcriptional activator. Plays an important role in spermatogenesis; essential for the progression of meiotic prophase I in spermatocytes. This is Zinc finger and SCAN domain-containing protein 21 (ZSCAN21) from Homo sapiens (Human).